The sequence spans 640 residues: Chaperone protein HtpG (640 aa).

The tract at residues 1-348 is a; substrate-binding; that stretch reads MAQYKFETEV…SEDLPLNVSR (348 aa). The segment at 349–565 is b; that stretch reads EILQQNRILS…ETDPSLQMER (217 aa). The tract at residues 566–640 is c; that stretch reads MMRAMGQFNT…RLNRLMTNLK (75 aa).

The protein belongs to the heat shock protein 90 family. In terms of assembly, homodimer.

It localises to the cytoplasm. Its function is as follows. Molecular chaperone. Has ATPase activity. This Treponema denticola (strain ATCC 35405 / DSM 14222 / CIP 103919 / JCM 8153 / KCTC 15104) protein is Chaperone protein HtpG.